The sequence spans 352 residues: DNA polymerase IV (352 aa).

The UmuC domain maps to 4–185 (IIHVDMDCFF…LPLSKIPGVG (182 aa)). Mg(2+) is bound by residues Asp-8 and Asp-103. Glu-104 is an active-site residue.

This sequence belongs to the DNA polymerase type-Y family. As to quaternary structure, monomer. Mg(2+) serves as cofactor.

The protein resides in the cytoplasm. The enzyme catalyses DNA(n) + a 2'-deoxyribonucleoside 5'-triphosphate = DNA(n+1) + diphosphate. Its function is as follows. Poorly processive, error-prone DNA polymerase involved in untargeted mutagenesis. Copies undamaged DNA at stalled replication forks, which arise in vivo from mismatched or misaligned primer ends. These misaligned primers can be extended by PolIV. Exhibits no 3'-5' exonuclease (proofreading) activity. May be involved in translesional synthesis, in conjunction with the beta clamp from PolIII. This chain is DNA polymerase IV, found in Yersinia pseudotuberculosis serotype O:1b (strain IP 31758).